The following is a 181-amino-acid chain: Der GTPase-activating protein YihI (181 aa).

Residues 1-73 (MSRIKKARKP…DPRIGSKKPI (73 aa)) are disordered. The segment covering 22–32 (NRTDRDVESRE) has biased composition (basic and acidic residues). Positions 33–42 (LKRKRKRKGL) are enriched in basic residues. The span at 55–67 (QARRNAQKKDPRI) shows a compositional bias: basic and acidic residues.

It belongs to the YihI family. Interacts with Der.

A GTPase-activating protein (GAP) that modifies Der/EngA GTPase function. May play a role in ribosome biogenesis. The chain is Der GTPase-activating protein YihI from Aliivibrio fischeri (strain MJ11) (Vibrio fischeri).